Consider the following 338-residue polypeptide: Lipoate-protein ligase A (338 aa).

The BPL/LPL catalytic domain maps to proline 29–valine 216. ATP contacts are provided by residues arginine 71, glycine 76–phenylalanine 79, and lysine 134. Lysine 134 lines the (R)-lipoate pocket.

The protein belongs to the LplA family. Monomer.

It localises to the cytoplasm. The catalysed reaction is L-lysyl-[lipoyl-carrier protein] + (R)-lipoate + ATP = N(6)-[(R)-lipoyl]-L-lysyl-[lipoyl-carrier protein] + AMP + diphosphate + H(+). The protein operates within protein modification; protein lipoylation via exogenous pathway; protein N(6)-(lipoyl)lysine from lipoate: step 1/2. Its pathway is protein modification; protein lipoylation via exogenous pathway; protein N(6)-(lipoyl)lysine from lipoate: step 2/2. Its function is as follows. Catalyzes both the ATP-dependent activation of exogenously supplied lipoate to lipoyl-AMP and the transfer of the activated lipoyl onto the lipoyl domains of lipoate-dependent enzymes. The sequence is that of Lipoate-protein ligase A from Enterobacter sp. (strain 638).